Reading from the N-terminus, the 293-residue chain is 4-hydroxy-tetrahydrodipicolinate synthase (293 aa).

Thr-45 provides a ligand contact to pyruvate. Tyr-133 functions as the Proton donor/acceptor in the catalytic mechanism. The active-site Schiff-base intermediate with substrate is the Lys-161. Residue Ile-204 coordinates pyruvate.

This sequence belongs to the DapA family. As to quaternary structure, homotetramer; dimer of dimers.

It is found in the cytoplasm. It catalyses the reaction L-aspartate 4-semialdehyde + pyruvate = (2S,4S)-4-hydroxy-2,3,4,5-tetrahydrodipicolinate + H2O + H(+). The protein operates within amino-acid biosynthesis; L-lysine biosynthesis via DAP pathway; (S)-tetrahydrodipicolinate from L-aspartate: step 3/4. Catalyzes the condensation of (S)-aspartate-beta-semialdehyde [(S)-ASA] and pyruvate to 4-hydroxy-tetrahydrodipicolinate (HTPA). In Edwardsiella ictaluri (strain 93-146), this protein is 4-hydroxy-tetrahydrodipicolinate synthase.